Reading from the N-terminus, the 115-residue chain is NADH-ubiquinone oxidoreductase chain 3 (115 aa).

Transmembrane regions (helical) follow at residues 4 to 24, 55 to 75, and 84 to 104; these read LMALLVNITLSTLLIIVAFWL, FFLVAITFLLFDLEIALLLPL, and INIMMLTAFILVSVLALGLAY.

It belongs to the complex I subunit 3 family. Core subunit of respiratory chain NADH dehydrogenase (Complex I) which is composed of 45 different subunits. Interacts with TMEM186. Interacts with TMEM242.

The protein resides in the mitochondrion inner membrane. It catalyses the reaction a ubiquinone + NADH + 5 H(+)(in) = a ubiquinol + NAD(+) + 4 H(+)(out). Core subunit of the mitochondrial membrane respiratory chain NADH dehydrogenase (Complex I) which catalyzes electron transfer from NADH through the respiratory chain, using ubiquinone as an electron acceptor. Essential for the catalytic activity of complex I. This is NADH-ubiquinone oxidoreductase chain 3 from Peromyscus melanotis (Black-eared mouse).